Reading from the N-terminus, the 349-residue chain is Homeobox protein engrailed (349 aa).

Disordered stretches follow at residues 26–53 (DGPS…SPLS), 146–210 (GKET…PLPP), 228–252 (PSSG…EKRP), and 327–349 (STIP…ARIE). Composition is skewed to basic and acidic residues over residues 173–188 (QMKK…RTES) and 242–252 (DKAITPDEKRP). The homeobox DNA-binding region spans 249-308 (EKRPRTAFTAEQLSRLKHEFNENRYLTERRRQDLARELGLHENQIKIWFQNNRAKLKKSS).

Belongs to the engrailed homeobox family.

It localises to the nucleus. This chain is Homeobox protein engrailed, found in Artemia franciscana (Brine shrimp).